Consider the following 472-residue polypeptide: MKSVKDFLNKHNLTLKGATIIVGVSGGPDSMALLHALHTLCGRSANVIAAHVDHRFRGAESEEDMRFVQAYCKAEQLVCETAQINVTAYAQEKGLNKQAAARDCRYQFFEEIMSKHQADYLALAHHGDDQVETMLMKLAKGTLGTGLAGMQPVRRFGTGRIIRPFLTITKEEILHYCHENGLSYRTDESNAKDDYTRNRFRKTVLPFLKQESPDVHKRFQKVSEALTEDEQFLQSLTKDEMNKVITSQSNTSVEINSSQLLALPMPLQRRGVQLILNYLYENVPSSFSAHHIQQFLDWAENGGPSGVLDFPKGLKVVKSYQTCLFTFEQWQCKNVPFEYQISGAADETAVLPNGYLIEARHYADSPEEHGNAVFITSEKKVRFPLTIRTRKAGDRIKLKGMNGSKKVKDIFIDKKLPLQERDNWPIVTDASGEIIWIPGLKKSIFEDLVIPNSDRIVLQYRQHEKCRGQAKS.

25–30 (SGGPDS) is a binding site for ATP.

This sequence belongs to the tRNA(Ile)-lysidine synthase family.

Its subcellular location is the cytoplasm. The enzyme catalyses cytidine(34) in tRNA(Ile2) + L-lysine + ATP = lysidine(34) in tRNA(Ile2) + AMP + diphosphate + H(+). Functionally, ligates lysine onto the cytidine present at position 34 of the AUA codon-specific tRNA(Ile) that contains the anticodon CAU, in an ATP-dependent manner. Cytidine is converted to lysidine, thus changing the amino acid specificity of the tRNA from methionine to isoleucine. This Bacillus subtilis (strain 168) protein is tRNA(Ile)-lysidine synthase (tilS).